The chain runs to 84 residues: Large ribosomal subunit protein bL27 (84 aa).

The interval 1–22 (MAKTKAGGSTKNGRDSAGRRLG) is disordered.

This sequence belongs to the bacterial ribosomal protein bL27 family.

The polypeptide is Large ribosomal subunit protein bL27 (Mesomycoplasma hyopneumoniae (strain 232) (Mycoplasma hyopneumoniae)).